Here is a 28-residue protein sequence, read N- to C-terminus: Chaperonin GroEL (28 aa).

It belongs to the chaperonin (HSP60) family. In terms of assembly, forms a cylinder of 14 subunits composed of two heptameric rings stacked back-to-back. Interacts with the co-chaperonin GroES.

The protein localises to the cytoplasm. The enzyme catalyses ATP + H2O + a folded polypeptide = ADP + phosphate + an unfolded polypeptide.. Together with its co-chaperonin GroES, plays an essential role in assisting protein folding. The GroEL-GroES system forms a nano-cage that allows encapsulation of the non-native substrate proteins and provides a physical environment optimized to promote and accelerate protein folding. The sequence is that of Chaperonin GroEL from Mycolicibacterium smegmatis (Mycobacterium smegmatis).